The sequence spans 534 residues: Probable alpha-galactosidase A (534 aa).

A signal peptide spans 1–25 (MRLITRWIPLANALASTMPVQVVAS). Residues cysteine 47 and cysteine 79 are joined by a disulfide bond. Asparagine 50, asparagine 88, asparagine 94, and asparagine 124 each carry an N-linked (GlcNAc...) asparagine glycan. Cysteine 127 and cysteine 157 are joined by a disulfide. The active-site Nucleophile is the aspartate 155. Asparagine 204 is a glycosylation site (N-linked (GlcNAc...) asparagine). Aspartate 213 functions as the Proton donor in the catalytic mechanism. One can recognise a Ricin B-type lectin domain in the interval 413 to 534 (CSQVIPTGLI…GLPAGVHVAL (122 aa)). Cysteines 430 and 443 form a disulfide. The N-linked (GlcNAc...) asparagine glycan is linked to asparagine 444. A disulfide bond links cysteine 468 and cysteine 481.

The protein belongs to the glycosyl hydrolase 27 family.

Its subcellular location is the secreted. It catalyses the reaction Hydrolysis of terminal, non-reducing alpha-D-galactose residues in alpha-D-galactosides, including galactose oligosaccharides, galactomannans and galactolipids.. Functionally, hydrolyzes a variety of simple alpha-D-galactoside as well as more complex molecules such as oligosaccharides and polysaccharides. This Aspergillus oryzae (strain ATCC 42149 / RIB 40) (Yellow koji mold) protein is Probable alpha-galactosidase A (aglA).